A 230-amino-acid polypeptide reads, in one-letter code: ATP synthase subunit a 1 (230 aa).

A run of 5 helical transmembrane segments spans residues 20-40 (ATIV…WLIT), 78-98 (FLPF…LTIF), 112-132 (AALA…NVGI), 174-194 (LLVA…MTLF), and 195-215 (GLLV…VYIA).

Belongs to the ATPase A chain family. As to quaternary structure, F-type ATPases have 2 components, CF(1) - the catalytic core - and CF(0) - the membrane proton channel. CF(1) has five subunits: alpha(3), beta(3), gamma(1), delta(1), epsilon(1). CF(0) has four main subunits: a, b, b' and c.

Its subcellular location is the cellular thylakoid membrane. Key component of the proton channel; it plays a direct role in the translocation of protons across the membrane. This is ATP synthase subunit a 1 from Crocosphaera subtropica (strain ATCC 51142 / BH68) (Cyanothece sp. (strain ATCC 51142)).